We begin with the raw amino-acid sequence, 871 residues long: Protein translocase subunit SecA (871 aa).

Residues glutamine 80, 98-102 (GEGKT), and aspartate 537 each bind ATP.

This sequence belongs to the SecA family. Monomer and homodimer. Part of the essential Sec protein translocation apparatus which comprises SecA, SecYEG and auxiliary proteins SecDF. Other proteins may also be involved.

It is found in the cell inner membrane. It localises to the cytoplasm. It carries out the reaction ATP + H2O + cellular proteinSide 1 = ADP + phosphate + cellular proteinSide 2.. Its function is as follows. Part of the Sec protein translocase complex. Interacts with the SecYEG preprotein conducting channel. Has a central role in coupling the hydrolysis of ATP to the transfer of proteins into and across the cell membrane, serving as an ATP-driven molecular motor driving the stepwise translocation of polypeptide chains across the membrane. The polypeptide is Protein translocase subunit SecA (Thermotoga sp. (strain RQ2)).